Reading from the N-terminus, the 362-residue chain is 3-dehydroquinate synthase (362 aa).

Residues D70 to K75, G104 to D108, T128 to T129, K141, K150, and T168 to T171 each bind NAD(+). Positions 183, 246, and 263 each coordinate Zn(2+).

The protein belongs to the sugar phosphate cyclases superfamily. Dehydroquinate synthase family. It depends on NAD(+) as a cofactor. Requires Co(2+) as cofactor. Zn(2+) is required as a cofactor.

It localises to the cytoplasm. It carries out the reaction 7-phospho-2-dehydro-3-deoxy-D-arabino-heptonate = 3-dehydroquinate + phosphate. It functions in the pathway metabolic intermediate biosynthesis; chorismate biosynthesis; chorismate from D-erythrose 4-phosphate and phosphoenolpyruvate: step 2/7. Functionally, catalyzes the conversion of 3-deoxy-D-arabino-heptulosonate 7-phosphate (DAHP) to dehydroquinate (DHQ). In Haemophilus influenzae (strain ATCC 51907 / DSM 11121 / KW20 / Rd), this protein is 3-dehydroquinate synthase.